The primary structure comprises 245 residues: uncharacterized protein (245 aa).

This is an uncharacterized protein from Dictyostelium discoideum (Social amoeba).